Here is a 294-residue protein sequence, read N- to C-terminus: Nucleotide-binding protein Maqu_2718 (294 aa).

8–15 (GRSGSGKS) provides a ligand contact to ATP. Residue 61–64 (DARN) coordinates GTP.

This sequence belongs to the RapZ-like family.

In terms of biological role, displays ATPase and GTPase activities. The sequence is that of Nucleotide-binding protein Maqu_2718 from Marinobacter nauticus (strain ATCC 700491 / DSM 11845 / VT8) (Marinobacter aquaeolei).